We begin with the raw amino-acid sequence, 210 residues long: Large ribosomal subunit protein bL25 (210 aa).

This sequence belongs to the bacterial ribosomal protein bL25 family. CTC subfamily. Part of the 50S ribosomal subunit; part of the 5S rRNA/L5/L18/L25 subcomplex. Contacts the 5S rRNA. Binds to the 5S rRNA independently of L5 and L18.

Functionally, this is one of the proteins that binds to the 5S RNA in the ribosome where it forms part of the central protuberance. In Herminiimonas arsenicoxydans, this protein is Large ribosomal subunit protein bL25.